A 188-amino-acid chain; its full sequence is Elongation factor P (188 aa).

An N6-(3,6-diaminohexanoyl)-5-hydroxylysine modification is found at Lys-34.

Belongs to the elongation factor P family. May be beta-lysylated on the epsilon-amino group of Lys-34 by the combined action of EpmA and EpmB, and then hydroxylated on the C5 position of the same residue by EpmC (if this protein is present). Lysylation is critical for the stimulatory effect of EF-P on peptide-bond formation. The lysylation moiety may extend toward the peptidyltransferase center and stabilize the terminal 3-CCA end of the tRNA. Hydroxylation of the C5 position on Lys-34 may allow additional potential stabilizing hydrogen-bond interactions with the P-tRNA.

The protein localises to the cytoplasm. It functions in the pathway protein biosynthesis; polypeptide chain elongation. Its function is as follows. Involved in peptide bond synthesis. Alleviates ribosome stalling that occurs when 3 or more consecutive Pro residues or the sequence PPG is present in a protein, possibly by augmenting the peptidyl transferase activity of the ribosome. Modification of Lys-34 is required for alleviation. The chain is Elongation factor P from Vibrio vulnificus (strain CMCP6).